The chain runs to 620 residues: Chaperone protein HscA homolog (620 aa).

The protein belongs to the heat shock protein 70 family.

In terms of biological role, chaperone involved in the maturation of iron-sulfur cluster-containing proteins. Has a low intrinsic ATPase activity which is markedly stimulated by HscB. This Pseudomonas syringae pv. tomato (strain ATCC BAA-871 / DC3000) protein is Chaperone protein HscA homolog.